The chain runs to 40 residues: Photosystem II reaction center protein J (40 aa).

Residues 8 to 28 form a helical membrane-spanning segment; the sequence is IPLWIIGTGAGILVIGLIGIF.

The protein belongs to the PsbJ family. PSII is composed of 1 copy each of membrane proteins PsbA, PsbB, PsbC, PsbD, PsbE, PsbF, PsbH, PsbI, PsbJ, PsbK, PsbL, PsbM, PsbT, PsbX, PsbY, PsbZ, Psb30/Ycf12, at least 3 peripheral proteins of the oxygen-evolving complex and a large number of cofactors. It forms dimeric complexes.

Its subcellular location is the plastid. It localises to the chloroplast thylakoid membrane. Its function is as follows. One of the components of the core complex of photosystem II (PSII). PSII is a light-driven water:plastoquinone oxidoreductase that uses light energy to abstract electrons from H(2)O, generating O(2) and a proton gradient subsequently used for ATP formation. It consists of a core antenna complex that captures photons, and an electron transfer chain that converts photonic excitation into a charge separation. The polypeptide is Photosystem II reaction center protein J (Aethionema grandiflorum (Persian stone-cress)).